A 208-amino-acid polypeptide reads, in one-letter code: Sec-independent protein translocase protein TatB (208 aa).

A helical transmembrane segment spans residues 1–21 (MFDIGVGELTLIAVVALVVLG). Low complexity predominate over residues 178–189 (APEPVAVAPVDA). The interval 178-208 (APEPVAVAPVDAGTPAAWTPSAPAKLQEKQP) is disordered.

This sequence belongs to the TatB family. The Tat system comprises two distinct complexes: a TatABC complex, containing multiple copies of TatA, TatB and TatC subunits, and a separate TatA complex, containing only TatA subunits. Substrates initially bind to the TatABC complex, which probably triggers association of the separate TatA complex to form the active translocon.

It localises to the cell inner membrane. Functionally, part of the twin-arginine translocation (Tat) system that transports large folded proteins containing a characteristic twin-arginine motif in their signal peptide across membranes. Together with TatC, TatB is part of a receptor directly interacting with Tat signal peptides. TatB may form an oligomeric binding site that transiently accommodates folded Tat precursor proteins before their translocation. The sequence is that of Sec-independent protein translocase protein TatB from Xanthomonas euvesicatoria pv. vesicatoria (strain 85-10) (Xanthomonas campestris pv. vesicatoria).